A 290-amino-acid polypeptide reads, in one-letter code: Membrane protein insertase YidC 2 (290 aa).

Positions 1-19 (MKKKALLPLFLGIMIFLAG) are cleaved as a signal peptide. Residue Cys-20 is the site of N-palmitoyl cysteine attachment. Cys-20 carries the S-diacylglycerol cysteine lipid modification. Transmembrane regions (helical) follow at residues 56–76 (FGLAIIVLVLFIRLILLPFML), 134–154 (MLGCLPILIQMPIIMGLYFVL), 176–196 (PDIWITVIAGVLYFIQAVVSS), 211–231 (MVISPIMIIWISLQASSALGL), and 232–252 (YWSVSALFLVIQTHFANIYYS). The interval 266–290 (YEREHNPSSKKKGKNTQVVSKKNKK) is disordered. Positions 280-290 (NTQVVSKKNKK) are enriched in polar residues.

Belongs to the OXA1/ALB3/YidC family. Type 2 subfamily.

It is found in the cell membrane. Functionally, required for the insertion and/or proper folding and/or complex formation of integral membrane proteins into the membrane. Involved in integration of membrane proteins that insert both dependently and independently of the Sec translocase complex, as well as at least some lipoproteins. In Staphylococcus epidermidis (strain ATCC 35984 / DSM 28319 / BCRC 17069 / CCUG 31568 / BM 3577 / RP62A), this protein is Membrane protein insertase YidC 2.